A 252-amino-acid polypeptide reads, in one-letter code: Chitooligosaccharide deacetylase (252 aa).

Residues H61 and H125 each coordinate Mg(2+).

The protein belongs to the YdjC deacetylase family. ChbG subfamily. Homodimer. It depends on Mg(2+) as a cofactor.

The protein resides in the cytoplasm. It catalyses the reaction N,N'-diacetylchitobiose + H2O = N-acetyl-beta-D-glucosaminyl-(1-&gt;4)-D-glucosamine + acetate. The enzyme catalyses diacetylchitobiose-6'-phosphate + H2O = N'-monoacetylchitobiose-6'-phosphate + acetate. It participates in glycan degradation; chitin degradation. Functionally, involved in the degradation of chitin. ChbG is essential for growth on the acetylated chitooligosaccharides chitobiose and chitotriose but is dispensable for growth on cellobiose and chitosan dimer, the deacetylated form of chitobiose. Deacetylation of chitobiose-6-P and chitotriose-6-P is necessary for both the activation of the chb promoter by the regulatory protein ChbR and the hydrolysis of phosphorylated beta-glucosides by the phospho-beta-glucosidase ChbF. Catalyzes the removal of only one acetyl group from chitobiose-6-P to yield monoacetylchitobiose-6-P, the inducer of ChbR and the substrate of ChbF. The chain is Chitooligosaccharide deacetylase from Escherichia coli O8 (strain IAI1).